Here is an 83-residue protein sequence, read N- to C-terminus: Cytochrome b559 subunit alpha (83 aa).

The chain crosses the membrane as a helical span at residues 21 to 35 (VIHSITVPSLFIAGW). His-23 contacts heme.

This sequence belongs to the PsbE/PsbF family. Heterodimer of an alpha subunit and a beta subunit. PSII is composed of 1 copy each of membrane proteins PsbA, PsbB, PsbC, PsbD, PsbE, PsbF, PsbH, PsbI, PsbJ, PsbK, PsbL, PsbM, PsbT, PsbX, PsbY, PsbZ, Psb30/Ycf12, at least 3 peripheral proteins of the oxygen-evolving complex and a large number of cofactors. It forms dimeric complexes. Heme b serves as cofactor.

Its subcellular location is the plastid. The protein localises to the chloroplast thylakoid membrane. This b-type cytochrome is tightly associated with the reaction center of photosystem II (PSII). PSII is a light-driven water:plastoquinone oxidoreductase that uses light energy to abstract electrons from H(2)O, generating O(2) and a proton gradient subsequently used for ATP formation. It consists of a core antenna complex that captures photons, and an electron transfer chain that converts photonic excitation into a charge separation. The sequence is that of Cytochrome b559 subunit alpha from Oltmannsiellopsis viridis (Marine flagellate).